We begin with the raw amino-acid sequence, 2271 residues long: MSKRQKAFHDSLANEKTRVRLYKSGKNWVKSGIKEIEMFKIMGLPFISHSLVSQDNQSISKKMTGYGLKTTAVIGGAFTVNMLHDQQAFAASDAPLTSELNTQSETVGNQNSTTIEASTSTADSTSVTKNSSSVQTSNSDTVSSEKSEKVTSTTNSTSNQQEKLTSTSESTSSKNTTSSSDTKSVASTSSTEQPINTSTNQSTASNNTSQSTTPSSVNLNKTSTTSTSTAPVKLRTFSRLAMSTFASAATTTAVTANTITVNKDNLKQYMTTSGNATYDQSTGIVTLTQDAYSQKGAITLGTRIDSNKSFHFSGKVNLGNKYEGHGNGGDGIGFAFSPGVLGETGLNGAAVGIGGLSNAFGFKLDTYHNTSKPNSAAKANADPSNVAGGGAFGAFVTTDSYGVATTYTSSSTADNAAKLNVQPTNNTFQDFDINYNGDTKVMTVKYAGQTWTRNISDWIAKSGTTNFSLSMTASTGGATNLQQVQFGTFEYTESAVTQVRYVDVTTGKDIIPPKTYSGNVDQVVTIDNQQSALTAKGYNYTSVDSSYASTYNDTNKTVKMTNAGQSVTYYFTDVKAPTVTVGNQTIEVGKTMNPVVLTTTDNGTGTVTNTVTGLPSGLSYDSATNSIIGTPTKIGQSTVTVVSTDQANNKSTTTFTINVVDTTAPTVTPIGDQSSEVYSPISPIKIATQDNSGNAVTNTVTGLPSGLTFDSTNNTISGTPTNIGTSTISIVSTDASGNKTTTTFKYEVTRNSMSDSVSTSGSTQQSQSVSTSKADSQSASTSTSGSIVVSTSASTSKSTSVSLSDSVSASKSLSTSESNSVSSSTSTSLVNSQSVSSSMSGSVSKSTSLSDSISNSNSTEKSESLSTSTSDSLRTSTSLSDSLSMSTSGSLSKSQSLSTSISGSSSTSASLSDSTSNAISTSTSLSESASTSDSISISNSIANSQSASTSKSDSQSTSISLSTSDSKSMSTSESLSDSTSTSGSVSGSLSIAASQSVSTSTSDSMSTSEIVSDSISTSGSLSASDSKSMSVSSSMSTSQSGSTSESLSDSQSTSDSDSKSLSLSTSQSGSTSTSTSTSASVRTSESQSTSGSMSASQSDSMSISTSFSDSTSDSKSASTASSESISQSASTSTSGSVSTSTSLSTSNSERTSTSVSDSTSLSTSESDSISESTSTSDSISEAISASESTSISLSESNSTSDSESQSASAFLSESLSESTSESTSESVSSSTSESTSLSDSTSESGSTSTSLSNSTSGSASISTSTSISESTSTFKSESVSTSLSMSTSTSLSNSTSLSTSLSDSTSDSKSDSLSTSMSTSDSISTSKSDSISTSTSLSGSTSESESDSTSSSESKSDSTSMSISMSQSTSGSTSTSTSTSLSDSTSTSLSLSASMNQSGVDSNSASQSASNSTSTSTSESDSQSTSTYTSQSTSQSESTSTSTSLSDSTSISKSTSQSGSTSTSASLSGSESESDSQSISTSASESTSESASTSLSDSTSTSNSGSASTSTSLSNSASASESDSSSTSLSDSTSASMQSSESDSQSTSASLSDSLSTSTSNRMSTIASLSTSVSTSESGSTSESTSESDSTSTSLSDSQSTSRSTSASGSASTSTSTSDSRSTSASTSTSMRTSTSDSQSMSLSTSTSTSMSDSTSLSDSVSDSTSDSTSASTSGSMSVSISLSDSTSTSTSASEVMSASISDSQSMSESVNDSESVSESNSESDSKSMSGSTSVSDSGSLSVSTSLRKSESVSESSSLSGSQSMSDSVSTSDSSSLSVSTSLRSSESVSESDSLSDSKSTSGSTSTSTSGSLSTSTSLSGSESVSESTSLSDSISMSDSTSTSDSDSLSGSISLSGSTSLSTSDSLSDSKSLSSSQSMSGSESTSTSVSDSQSSSTSNSQFDSMSISASESDSMSTSDSSNISGSNSTSTSLSTSDSMSGSVSVSTSTSLSDSISGSTSVSDSSSTSTSTSLSDSMSQSQSTSTSASGSLSTSISTSMSMSASTSSSQSTSVSTSLSTSDSISDSTSISISGSQSTVESESTSDSTSISDSESLSTSDSDSTSTSTSDSTSGSTSTSISESLSTSGSGSTSVSDSTSMSESDSTSVSMSQDKSDSTSISDSESVSTSTSTSLSTSDSTSTSESLSTSMSGSQSISDSTSTSMSGSTSTSESNSMHPSDSMSMHHTHSTSTSRLSSEATTSTSESQSTLSATSEVTKHNGTPAQSEKRLPDTGDSIKQNGLLGGVMTLLVGLGLMKRKKKKDENDQDDSQA.

An N-terminal signal peptide occupies residues 1–89 (MSKRQKAFHD…VNMLHDQQAF (89 aa)). The tract at residues 90–230 (AASDAPLTSE…KTSTTSTSTA (141 aa)) is serine-rich repeat region 1, SRR1. Positions 100 to 111 (LNTQSETVGNQN) are enriched in polar residues. 3 disordered regions span residues 100 to 229 (LNTQ…STST), 751 to 791 (NSMS…VVST), and 806 to 2243 (SVSA…GLLG). Positions 112 to 128 (STTIEASTSTADSTSVT) are enriched in low complexity. Over residues 129-140 (KNSSSVQTSNSD) the composition is skewed to polar residues. A compositionally biased stretch (low complexity) spans 150–229 (VTSTTNSTSN…NKTSTTSTST (80 aa)). The tract at residues 231–751 (PVKLRTFSRL…TTFKYEVTRN (521 aa)) is non-repeat region (NRR). Composition is skewed to low complexity over residues 752–791 (SMSDSVSTSGSTQQSQSVSTSKADSQSASTSTSGSIVVST), 806–1392 (SVSA…LSLS), and 1402–2214 (SNSA…ATSE). The tract at residues 752–2232 (SMSDSVSTSG…AQSEKRLPDT (1481 aa)) is serine-rich repeat region 2, SRR2. The LPXTG sorting signal signature appears at 2229–2233 (LPDTG). At Thr-2232 the chain carries Pentaglycyl murein peptidoglycan amidated threonine. A propeptide spans 2233-2271 (GDSIKQNGLLGGVMTLLVGLGLMKRKKKKDENDQDDSQA) (removed by sortase).

Belongs to the serine-rich repeat protein (SRRP) family. In terms of processing, proteolytically cleaved by a metalloprotease. Glycosylated. It is probable that most of the Ser residues in SSR1 and SSR2 are O-GlcNAcylated. Sequential glycosylation by sugar transferases are able to generate complex sugar polymorphisms.

The protein localises to the secreted. It localises to the cell wall. Mediates binding to human platelets, possibly through a receptor-ligand interaction. Probably associated with virulence in endovascular infection. This Staphylococcus aureus (strain Mu50 / ATCC 700699) protein is Serine-rich adhesin for platelets (sraP).